We begin with the raw amino-acid sequence, 299 residues long: Ribosomal protein L11 methyltransferase (299 aa).

Residues T144, G165, D187, and N229 each coordinate S-adenosyl-L-methionine.

This sequence belongs to the methyltransferase superfamily. PrmA family.

It localises to the cytoplasm. The catalysed reaction is L-lysyl-[protein] + 3 S-adenosyl-L-methionine = N(6),N(6),N(6)-trimethyl-L-lysyl-[protein] + 3 S-adenosyl-L-homocysteine + 3 H(+). Methylates ribosomal protein L11. The polypeptide is Ribosomal protein L11 methyltransferase (Teredinibacter turnerae (strain ATCC 39867 / T7901)).